The primary structure comprises 238 residues: Ribosomal RNA small subunit methyltransferase G (238 aa).

S-adenosyl-L-methionine is bound by residues Gly77, Phe82, 128–129, and Arg147; that span reads AE.

This sequence belongs to the methyltransferase superfamily. RNA methyltransferase RsmG family.

The protein localises to the cytoplasm. In terms of biological role, specifically methylates the N7 position of guanine in position 535 of 16S rRNA. This chain is Ribosomal RNA small subunit methyltransferase G, found in Exiguobacterium sibiricum (strain DSM 17290 / CCUG 55495 / CIP 109462 / JCM 13490 / 255-15).